Reading from the N-terminus, the 158-residue chain is Transcription factor BTF3 homolog 4 (158 aa).

The NAC-A/B domain maps to 33 to 98 (TADDKKLQSS…AEAKPITEML (66 aa)). The interval 124-158 (VLDSKAPKSEDIDEEDDDVPDLAENFDEASKNEAN) is disordered. The segment covering 134-150 (DIDEEDDDVPDLAENFD) has biased composition (acidic residues).

The protein belongs to the NAC-beta family.

In Gallus gallus (Chicken), this protein is Transcription factor BTF3 homolog 4 (BTF3L4).